A 423-amino-acid polypeptide reads, in one-letter code: uncharacterized protein (423 aa).

This is an uncharacterized protein from Ictaluridae (bullhead catfishes).